We begin with the raw amino-acid sequence, 201 residues long: Small ribosomal subunit protein uS4c (201 aa).

The tract at residues 15-43 (LGALPGLTRKTPKSGSNQKKKFHSGKKEQ) is disordered. Residues 89–150 (MRLDNILFRL…NQRSKRLVQN (62 aa)) form the S4 RNA-binding domain.

This sequence belongs to the universal ribosomal protein uS4 family. Part of the 30S ribosomal subunit. Contacts protein S5. The interaction surface between S4 and S5 is involved in control of translational fidelity.

It localises to the plastid. Its subcellular location is the chloroplast. One of the primary rRNA binding proteins, it binds directly to 16S rRNA where it nucleates assembly of the body of the 30S subunit. Its function is as follows. With S5 and S12 plays an important role in translational accuracy. This is Small ribosomal subunit protein uS4c (rps4) from Sorghum bicolor (Sorghum).